The following is a 299-amino-acid chain: Probable lipid kinase YegS (299 aa).

Positions 2–133 (AEFPASLLIL…IDMAQVNKQT (132 aa)) constitute a DAGKc domain. ATP contacts are provided by residues threonine 40, 66 to 72 (GDGTINE), and threonine 95. Positions 215, 218, and 220 each coordinate Mg(2+). The active-site Proton acceptor is glutamate 271.

It belongs to the diacylglycerol/lipid kinase family. YegS lipid kinase subfamily. Mg(2+) is required as a cofactor. It depends on Ca(2+) as a cofactor.

The protein resides in the cytoplasm. In terms of biological role, probably phosphorylates lipids; the in vivo substrate is unknown. The polypeptide is Probable lipid kinase YegS (Escherichia coli (strain 55989 / EAEC)).